The chain runs to 119 residues: Large ribosomal subunit protein bL20 (119 aa).

The protein belongs to the bacterial ribosomal protein bL20 family.

Binds directly to 23S ribosomal RNA and is necessary for the in vitro assembly process of the 50S ribosomal subunit. It is not involved in the protein synthesizing functions of that subunit. The protein is Large ribosomal subunit protein bL20 of Nitrosomonas eutropha (strain DSM 101675 / C91 / Nm57).